A 251-amino-acid polypeptide reads, in one-letter code: Tyrosine phosphatase-like protein J3 (251 aa).

The Tyrosine-protein phosphatase domain occupies 26–251 (IADEYYTIVP…PVLQNSKRRE (226 aa)).

It belongs to the protein-tyrosine phosphatase family.

The sequence is that of Tyrosine phosphatase-like protein J3 (J4) from Microplitis demolitor (Parasitoid wasp).